A 314-amino-acid polypeptide reads, in one-letter code: Putative S-adenosyl-L-methionine-dependent methyltransferase MAP_4191c (314 aa).

Residues Asp138 and 167-168 (DL) contribute to the S-adenosyl-L-methionine site.

It belongs to the UPF0677 family.

Functionally, exhibits S-adenosyl-L-methionine-dependent methyltransferase activity. This Mycolicibacterium paratuberculosis (strain ATCC BAA-968 / K-10) (Mycobacterium paratuberculosis) protein is Putative S-adenosyl-L-methionine-dependent methyltransferase MAP_4191c.